Consider the following 75-residue polypeptide: uncharacterized protein (75 aa).

Residues 1–19 (MKKTAAIISACMLTFALSA) form the signal peptide. Cysteine 20 is lipidated: N-palmitoyl cysteine. Cysteine 20 is lipidated: S-diacylglycerol cysteine.

To E.coli YgdR.

It localises to the cell membrane. This is an uncharacterized protein from Escherichia coli O6:H1 (strain CFT073 / ATCC 700928 / UPEC).